The chain runs to 471 residues: MPAASDKPVVTRFAPSPTGYLHIGGGRTALFNWLYARGRKGTFLLRIEDTDRERSTPEATDAILRGLTWLGLDWDGEVVSQFARKDRHAEVAREMLERGAAYKCFSTQEEIEAFRESARAEGRSTLFRSPWRDADPTSHPDAPFVIRMKAPRSGETVIEDEVQGTVRFQNETLDDMVVLRSDGTPTYMLAVVVDDHDMGVTHVIRGDDHLNNAARQTMVYEAMGWEVPVWAHIPLIHGPDGKKLSKRHGALGVEEYQAMGYPAAGMRNYLARLGWSHGDDEFFTSEQAMDWFDLGGIGRSPARLDFKKLESVCGQHIAVMEDAELMREIAAYLAAARKPALTDLQAARLEKGLYALKDRAKTFPELLEKARFALESRPIVADDAAAKALDPVSRGILRELTPMLQAASWSKQDLEAILTAFASEKGMGFGKLAAPLRTALAGRTVTPSVYDMMLVIGRDETIARLEDAAAA.

The 'HIGH' region motif lies at Pro-15–Gly-25. A 'KMSKS' region motif is present at residues Lys-243–Arg-247. An ATP-binding site is contributed by Lys-246.

It belongs to the class-I aminoacyl-tRNA synthetase family. Glutamate--tRNA ligase type 1 subfamily. Monomer.

The protein resides in the cytoplasm. The catalysed reaction is tRNA(Glu) + L-glutamate + ATP = L-glutamyl-tRNA(Glu) + AMP + diphosphate. Functionally, catalyzes the attachment of glutamate to tRNA(Glu) in a two-step reaction: glutamate is first activated by ATP to form Glu-AMP and then transferred to the acceptor end of tRNA(Glu). The sequence is that of Glutamate--tRNA ligase 1 from Cereibacter sphaeroides (strain ATCC 17023 / DSM 158 / JCM 6121 / CCUG 31486 / LMG 2827 / NBRC 12203 / NCIMB 8253 / ATH 2.4.1.) (Rhodobacter sphaeroides).